A 2699-amino-acid polypeptide reads, in one-letter code: MNPLFPFSLLNPSTMWSSSQNTSFVWVVIATGFLFHLVLFVLSYVLGWPFTNFGFFSVYGLRHTFRNGDSVFISYVALRLHRPSTSKPYLLRIVTKGLIYTPSLSSANDAQSAGKNENQRSRLVFKAKREEEKTEEKFCHAVYMSNLLRNVEQKWIQFLHKSWMKWLHISIQESQLTFPSVGTFELGSLSMEMRPETNNVVGYENPSDPELVSSCVICSIRLANLVYIDRRQSSQQITDYLDLSLQTYYSLDKSNVPDTILRLRSSIKVGVLYIDLDTPLFEHLLNSNSSGGNHSSSSSSSGKVHVMKDNVEAALLKLQEAQIQIGTLKLWKRNVTGCGATYILNGSDFGLNLILLNKKNPSHRMFFPVEACVHQILASALSFNVESITPGHSPHVLLNIPLVTITCLTSALAEYARDASDLHQLQNSILRVNSTLTSPSLDLRLELLHDVLSCFPKKHDSTSRKKPKFPYQYFPYMKFSVSLYEPALRFLIASKSDSDFPGMLVANLSSMFLDIKYSPSSEHIFEIESSLRLSSNKVFYHNPKNKKWLINTSDLITFSLGYICNNDHGSLNMFFRDFQIRIEEEEVINSLKKFIILTKIKSEQVGPRKPRTKLVEPLLFRIPKWLKHIQLEVHSLLLVITAIRPEISPEPRGINCSIDKIHSLYLNDKKSRSQGMRKFDLNLELLMIKSIIFKNGKSLNSHLFLQIPNINFIVSTILRDNTAISRFTTEINFLRCFASLLHNCCIFYAYRACSSLFGENKSHKRIEKTNTSPQEPGVVPEGWNFDFRLKNARVSIFLDDDVSLLLDCGGFTTLKKTEKKYAEMHAKFIQIHTKNSDVPTLWDRFLALGNVRYQLKDLSDLEKLHQVTCSYISIRIPHKFIPFILIESAINTVKAAIRVSAEPLTIDQQHDLAEEIKQPRVVPHIQIKSTKFKFEVDDDPFECRLGMNYRIGLTEQQMRIDRWNIFEERANLLRKAKDPSPKSASESSSFYQNGSDIDDNDSNSSNTSNHTTENANAQQRKLEDLNRSFEDFLGSRPTNNSSFLKNVSVDEDTAREKLMEYDSLSWISNIKRIREFRYHRLRIRRMTAWPESDALDKHILFKENIIPIPIRPPLVDISLLNFDFTLDKPSFPLEELPKFLNTVGRGQPLDYGYSIYFPMYIDWKMDEAKFLIRDYPLPLVYIPKLGRGQDKRISSWHLKSNMVITEQQATLAAIRDVSVKVIPADLTKEGIPYVVNVTRTVSPIKTFSKTEIDVNSSLPTFLLWCNSYQPALSDMTRIMDTFTKMPIDPSEKLGFWDKIRLVAHSQIRLRWLEDGDVFLSLKGSRDPYVILGEGAGFQFCWSGNVSWDIGCDENPANFMIVDSDKFYLTIPDFPRQINGILEGKPLPTKSTKRSYTTFGVLKDLRCRKVIAKLVGKVRWRAGFVPERHCDEDCTVCNRKKACRLWNFKPHWQVITRIPQYCHDTHYGVYDAYRDFRSHYIHCSLALESPRYLDDANAFENVNSYNTIHLTPLVFSHFSSWWNLFSNNMSYPLRSGNLFPTLDSSPNKKFGRHLATFKYALELTPLFISHMYNYKTNKNWQDRTASATGLKARVDNFTIDLHQRSEKHEVKNKANLGRKHQEATSMKVHLAEIDFKTIDLRAISASFDEGALDNSDSIPANVLDEEEKECFSFKNVDGPANWVDIDDYHEADWLLPQQNEKCSIYPLAFSPRFTYYRHTKCHRRNEKNEKEIIPDTCRFGDEFTHRCLMPSRENPKAVQYELLQKRRKELEEFMSSEQERIGFLKSQLESNNDSEEVRQEYEELTKRIVTLSDHYRLLEYLLKDESSCSQASQCSENGQVDLSYASLSESVHAFNNRFVAHNVQVKWNNFIRNAVMSYVHEVERVRGFAYYMSQKAIVFLRDLEKRTESANDDFFGNYTEDDEDRENARHLLKFLLEDSKKRFWVKTSDADREHGSEEGNTNSISNNEYDIIQSYVFRFISPQIQLQCSSNPEKAVIISIQSLQIKILSVVDPIFPDNDINYLIERRFLCKVNESQFFISKKSDFEVVNASSLVLNEYGCEHNTVWPPWVPFETTFDFVLTPAAFSRFLHRVSFSVIYTKHNDLRLQETVHSTRAFFEDLDTHADTLTFDFPRVVFSTDSSQYYDIFTIITDLLLYKEPAQKQRNQRLEEIMLAADFSDLTGTSEVVRALQARVHRLLDLKLQHQLYDVTFGIYAHIAQQLFLQNELHRCGEELYYLIESIAAVQNRGIHQNKVRSNLSWFLMAKEVVWHLLEDNKKPFLDVRLQNATFRRIENSDASNFNTLEIEFMKGSNLAPGCQFENIICPYFNHEFSNEQLLQQKFIRIHWEVLEAVAGIQVIQHFEINLFPLSLQIEQELATKLFAYAFPNRNESDGFPHIYSRNHDKRKENGSQGEADNSNYSGSLMRRRTNDQEEDALATPSSSRRDSRSKRASLIDFTIDKCLDVDDEGRMELQSMLDRAGSNMLITYFKIPSVVLRLSYRGTGGLGLENITGFVFTVPTMEYRNEVCSYLDLAMKLKHDLIRTVVSHTGKLLVEKVKGNYHLKEHEREVSSELLNLQQLSAEHNRHADLESMVMARDDYINVQQPLAEENQEEGSPASAISRNHSTRSSLNSPRQFWAYHGSRSKKIADIVKRHIPPTINGKRSKNKGNEGSNARVDFYNDERYDPVKRELILGASNRRK.

N-linked (GlcNAc...) asparagine glycosylation occurs at asparagine 21. A helical transmembrane segment spans residues 24-44 (FVWVVIATGFLFHLVLFVLSY). Residues asparagine 288, asparagine 293, asparagine 334, asparagine 345, asparagine 433, asparagine 507, asparagine 551, asparagine 655, asparagine 760, asparagine 993, asparagine 1000, asparagine 1003, asparagine 1006, and asparagine 1009 are each glycosylated (N-linked (GlcNAc...) asparagine). Residues 975–1021 (KAKDPSPKSASESSSFYQNGSDIDDNDSNSSNTSNHTTENANAQQRK) form a disordered region. Positions 981 to 995 (PKSASESSSFYQNGS) are enriched in low complexity. Residues 1006-1033 (NTSNHTTENANAQQRKLEDLNRSFEDFL) are a coiled coil. Polar residues predominate over residues 1010–1019 (HTTENANAQQ). N-linked (GlcNAc...) asparagine glycans are attached at residues asparagine 1026, asparagine 1039, asparagine 1046, asparagine 1236, asparagine 1255, asparagine 1344, asparagine 1527, asparagine 1595, asparagine 1791, asparagine 1916, asparagine 2032, asparagine 2048, asparagine 2256, asparagine 2285, asparagine 2388, asparagine 2407, asparagine 2417, asparagine 2508, and asparagine 2622. The stretch at 1758 to 1818 (QYELLQKRRK…TLSDHYRLLE (61 aa)) forms a coiled coil. The segment at 2393 to 2447 (FPHIYSRNHDKRKENGSQGEADNSNYSGSLMRRRTNDQEEDALATPSSSRRDSRS) is disordered. Residues 2408–2420 (GSQGEADNSNYSG) are compositionally biased toward polar residues. 2 disordered regions span residues 2606-2632 (AEEN…LNSP) and 2647-2676 (ADIV…ARVD). Polar residues predominate over residues 2617-2632 (SAISRNHSTRSSLNSP).

This sequence belongs to the UPF0648 family.

It is found in the membrane. The protein is UPF0648 protein C3H5.09c of Schizosaccharomyces pombe (strain 972 / ATCC 24843) (Fission yeast).